A 1080-amino-acid polypeptide reads, in one-letter code: Ubiquitin carboxyl-terminal hydrolase 8 (1080 aa).

In terms of domain architecture, MIT spans 33-116 (TKNYIHSAQK…ESLKLRYEEA (84 aa)). Basic and acidic residues predominate over residues 119–173 (RKQLEEKDRREEEQLQQQKRQEMGREDSGAAAKRSVENLLDSKTKTQRINGEKSE). Residues 119–176 (RKQLEEKDRREEEQLQQQKRQEMGREDSGAAAKRSVENLLDSKTKTQRINGEKSEGAA) form a disordered region. At serine 160 the chain carries Phosphoserine. The region spanning 195-313 (KNTSLIIMDA…WLLCYPQFTT (119 aa)) is the Rhodanese domain. The segment covering 379-393 (ALAGPGAAPRAEASP) has biased composition (low complexity). Disordered stretches follow at residues 379 to 455 (ALAG…TDEE), 468 to 605 (EKNK…RSEE), and 642 to 710 (PPEM…KPPC). At serine 392 the chain carries Phosphoserine. An SH3-binding motif is present at residues 405 to 413 (PQVDRTKKP). The segment covering 417 to 427 (LPEDHRIKSEN) has biased composition (basic and acidic residues). Serine 446 is modified (phosphoserine). Basic and acidic residues-rich tracts occupy residues 468–535 (EKNK…RELS), 549–577 (SKSEHEASDAKVPVEGKRCPTSEAQKRPA), and 593–605 (AQREPLTRARSEE). Phosphothreonine is present on threonine 569. The segment covering 678–688 (SYSSPDITQAL) has biased composition (polar residues). Phosphoserine is present on residues serine 680 and serine 681. Residues 739–1071 (TGLRNLGNTC…AAYILFYTSL (333 aa)) form the USP domain. Cysteine 748 (nucleophile) is an active-site residue. Phosphothreonine is present on threonine 907. Histidine 1029 functions as the Proton acceptor in the catalytic mechanism.

The protein belongs to the peptidase C19 family. As to quaternary structure, forms a ternary complex with RNF128 and OTUB1. Interacts (via C-terminal UCH catalytic domain) with OTUB1 isoform 1. Interacts with STAM2 (via SH3 domain). Interacts with DNAJB3, EGFR, EPS15, RASGRF1, RNF41, YWHAE, YWHAG and YWHAZ. Interacts with NBR1, RASGRF1, RNF41 and IST1. Associates with the ESCRT-0 complex and with microtubules. Interacts with BIRC6/bruce and KIF23/MKLP1. In terms of processing, phosphorylation of Ser-680 is essential for interaction with YWHAE and for cytosol localization. Undergoes dephosphorylation at Ser-680 in the M phase. Tyrosine-phosphorylated in its N-terminal half in an EGFR-dependent manner. Ubiquitinated. Inactive form is mostly monoubiquitinated, but polyubiquitination happens too. Ubiquitination is increased in EGF-stimulated cells. Ubiquitination of active form is undetectable, suggesting a possibility that USP8 deubiquitinates itself, thereby regulating its own function. In terms of tissue distribution, highly expressed in testis. Expressed at intermediate level in brain.

It is found in the cytoplasm. The protein resides in the nucleus. The protein localises to the endosome membrane. It localises to the cell membrane. It carries out the reaction Thiol-dependent hydrolysis of ester, thioester, amide, peptide and isopeptide bonds formed by the C-terminal Gly of ubiquitin (a 76-residue protein attached to proteins as an intracellular targeting signal).. Its function is as follows. Hydrolase that can remove conjugated ubiquitin from proteins and therefore plays an important regulatory role at the level of protein turnover by preventing degradation. Converts both 'Lys-48' an 'Lys-63'-linked ubiquitin chains. Catalytic activity is enhanced in the M phase. Involved in cell proliferation. Required to enter into S phase in response to serum stimulation. May regulate T-cell anergy mediated by RNF128 via the formation of a complex containing RNF128 and OTUB1. Probably regulates the stability of STAM2 and RASGRF1. Regulates endosomal ubiquitin dynamics, cargo sorting, membrane traffic at early endosomes, and maintenance of ESCRT-0 stability. The level of protein ubiquitination on endosomes is essential for maintaining the morphology of the organelle. Deubiquitinates EPS15 and controls tyrosine kinase stability. Removes conjugated ubiquitin from EGFR thus regulating EGFR degradation and downstream MAPK signaling. Involved in acrosome biogenesis through interaction with the spermatid ESCRT-0 complex and microtubules. Deubiquitinates BIRC6/bruce and KIF23/MKLP1. Deubiquitinates BACE1 which inhibits BACE1 lysosomal degradation and modulates BACE-mediated APP cleavage and amyloid-beta formation. The sequence is that of Ubiquitin carboxyl-terminal hydrolase 8 from Mus musculus (Mouse).